Consider the following 221-residue polypeptide: Germin-like protein subfamily 1 member 19 (221 aa).

The signal sequence occupies residues 1–21 (MKVSMSLILITLSALVTIAKA). Cys31 and Cys48 are joined by a disulfide. The Cupin type-1 domain occupies 76-213 (SNVTTVNVDQ…AFQLDVNVVK (138 aa)). Asn77 is a glycosylation site (N-linked (GlcNAc...) asparagine). Mn(2+) contacts are provided by His110, His112, Glu117, and His159.

Belongs to the germin family. Oligomer (believed to be a pentamer but probably hexamer).

It localises to the secreted. It is found in the extracellular space. The protein resides in the apoplast. Its function is as follows. May play a role in plant defense. Probably has no oxalate oxidase activity even if the active site is conserved. The sequence is that of Germin-like protein subfamily 1 member 19 from Arabidopsis thaliana (Mouse-ear cress).